The primary structure comprises 308 residues: MKITPIAFESLGVRSQATLIETKDLRVLVDPAISLAPRRYNLPPHQREVDRLTELAKVLVDVAKDVDVIIVSHYHYDHHDPGYVIPTDIYKNKLVFIKDPQNMINNSQKYRRAPRFLRSIKDKPSKIEIADGKTFEVGHTTISFSPAVPHGADERLGYVIQVAISDKDSTVIFTSDIEGAPKDVHLKFTKEKMPKTIIIDGPLSYLLGRVLKEEELEKSIRNMEEIVKNGLETVIIDHHVLRDINYAEVLKPVYDIAKDLGVRVTTAAEYLNLEPLILEARRKELFKEDNRPARLPRGLANLLSAGEG.

It belongs to the UPF0282 family.

The chain is UPF0282 protein M1425_2116 from Saccharolobus islandicus (strain M.14.25 / Kamchatka #1) (Sulfolobus islandicus).